Here is an 89-residue protein sequence, read N- to C-terminus: Small ribosomal subunit protein uS15 (89 aa).

It belongs to the universal ribosomal protein uS15 family. Part of the 30S ribosomal subunit. Forms a bridge to the 50S subunit in the 70S ribosome, contacting the 23S rRNA.

One of the primary rRNA binding proteins, it binds directly to 16S rRNA where it helps nucleate assembly of the platform of the 30S subunit by binding and bridging several RNA helices of the 16S rRNA. Functionally, forms an intersubunit bridge (bridge B4) with the 23S rRNA of the 50S subunit in the ribosome. The polypeptide is Small ribosomal subunit protein uS15 (Colwellia psychrerythraea (strain 34H / ATCC BAA-681) (Vibrio psychroerythus)).